Here is a 389-residue protein sequence, read N- to C-terminus: Pyruvylated Gal-beta-1,3-epitope synthesis protein 2 (389 aa).

Over 1–16 (MTKLWVNFFSQKLLRL) the chain is Cytoplasmic. Residues 17-37 (LIPSIIVVFAFAALFAIYSPI) form a helical membrane-spanning segment. The Lumenal portion of the chain corresponds to 38 to 389 (QLGGINFYKR…WSNSFDLITA (352 aa)).

The protein resides in the endoplasmic reticulum membrane. Its subcellular location is the golgi apparatus membrane. Involved in cell wall biogenesis. Has a role in the addition of Gal-beta1,3 moeities to galactomannans and their subsequent pyruvylation. Has a role in meiosis. In Schizosaccharomyces pombe (strain 972 / ATCC 24843) (Fission yeast), this protein is Pyruvylated Gal-beta-1,3-epitope synthesis protein 2 (pvg2).